The chain runs to 273 residues: Undecaprenyl-diphosphatase (273 aa).

A run of 7 helical transmembrane segments spans residues 54 to 74 (LGSILAVVVMFWRQLFGLIGI), 90 to 110 (LTLIHILLGMIPAVVLGLVFH), 116 to 136 (LFNPINVMYALVVGGLLLIAA), 156 to 178 (QAFMIGCFQCLALWPGFSRSGAT), 190 to 210 (YAASEFSFLLAVPMMMGATVL), 222 to 242 (ADIPMFAVGFVTAFVVALIAI), and 252 to 272 (ISFIPFAIYRFVVAAAVYVVF).

It belongs to the UppP family.

It is found in the cell inner membrane. It catalyses the reaction di-trans,octa-cis-undecaprenyl diphosphate + H2O = di-trans,octa-cis-undecaprenyl phosphate + phosphate + H(+). Its function is as follows. Catalyzes the dephosphorylation of undecaprenyl diphosphate (UPP). Confers resistance to bacitracin. This chain is Undecaprenyl-diphosphatase, found in Salmonella paratyphi A (strain ATCC 9150 / SARB42).